The primary structure comprises 30 residues: Glucagon-like peptide (30 aa).

Arginine 30 is modified (arginine amide).

The protein belongs to the glucagon family.

The protein resides in the secreted. This chain is Glucagon-like peptide, found in Anguilla anguilla (European freshwater eel).